The following is a 259-amino-acid chain: Probable ABC transporter permease protein RP096 (259 aa).

5 helical membrane passes run 13 to 35, 49 to 69, 148 to 168, 195 to 215, and 237 to 257; these read TIKFAQSVGIFSLFSFIAISSII, LFIGFHSLPVVAMTTFFSGAV, VIAAIITMPCLVLIGDIIGVM, PIDVISGLIKATVFGFIISII, and AVVNSSILILISNYLITELFF.

This sequence belongs to the MlaE permease family.

Its subcellular location is the cell inner membrane. Its function is as follows. Could be part of an ABC transporter complex. This Rickettsia prowazekii (strain Madrid E) protein is Probable ABC transporter permease protein RP096.